We begin with the raw amino-acid sequence, 96 residues long: ATP-dependent Clp protease adapter protein ClpS (96 aa).

This sequence belongs to the ClpS family. Binds to the N-terminal domain of the chaperone ClpA.

Its function is as follows. Involved in the modulation of the specificity of the ClpAP-mediated ATP-dependent protein degradation. This chain is ATP-dependent Clp protease adapter protein ClpS, found in Campylobacter jejuni subsp. jejuni serotype O:2 (strain ATCC 700819 / NCTC 11168).